Here is a 121-residue protein sequence, read N- to C-terminus: Flagellar protein FliT (121 aa).

Residues 1-50 form a required for homodimerization region; that stretch reads MNNAPHLYFAWQQLVEKSQLMLRLATEEQWDELIASEMAYVNAVQEIAHL. Positions 60-98 are fliD binding; it reads MQEQLRPMLLLILDNESKVKQLLQIRMDELAKLVGQSSV.

The protein belongs to the FliT family. As to quaternary structure, homodimer. Interacts with FliD and FlhC.

The protein localises to the cytoplasm. It localises to the cytosol. Dual-function protein that regulates the transcription of class 2 flagellar operons and that also acts as an export chaperone for the filament-capping protein FliD. As a transcriptional regulator, acts as an anti-FlhDC factor; it directly binds FlhC, thus inhibiting the binding of the FlhC/FlhD complex to class 2 promoters, resulting in decreased expression of class 2 flagellar operons. As a chaperone, effects FliD transition to the membrane by preventing its premature polymerization, and by directing it to the export apparatus. The chain is Flagellar protein FliT from Escherichia coli O6:K15:H31 (strain 536 / UPEC).